A 157-amino-acid chain; its full sequence is Protein-export protein SecB (157 aa).

Belongs to the SecB family. Homotetramer, a dimer of dimers. One homotetramer interacts with 1 SecA dimer.

Its subcellular location is the cytoplasm. Functionally, one of the proteins required for the normal export of preproteins out of the cell cytoplasm. It is a molecular chaperone that binds to a subset of precursor proteins, maintaining them in a translocation-competent state. It also specifically binds to its receptor SecA. The protein is Protein-export protein SecB of Dichelobacter nodosus (strain VCS1703A).